The primary structure comprises 92 residues: Small ribosomal subunit protein uS19 (92 aa).

Belongs to the universal ribosomal protein uS19 family.

Its function is as follows. Protein S19 forms a complex with S13 that binds strongly to the 16S ribosomal RNA. This chain is Small ribosomal subunit protein uS19, found in Bifidobacterium adolescentis (strain ATCC 15703 / DSM 20083 / NCTC 11814 / E194a).